The primary structure comprises 504 residues: Acetyltransferase pyiB (504 aa).

An N-terminal signal peptide occupies residues 1–18; that stretch reads MGFLSAGGLWASLFRARI. Asn84 carries N-linked (GlcNAc...) asparagine glycosylation. The active-site Proton acceptor is His181. Asn413 and Asn467 each carry an N-linked (GlcNAc...) asparagine glycan.

It belongs to the plant acyltransferase family.

It participates in mycotoxin biosynthesis. In terms of biological role, acetyltransferase; part of the gene cluster that mediates the biosynthesis of the mycotoxin pyrichalasin H, a tyrosine-derived cytochalasan that inhibits the growth of rice seedlings, but also inhibits lymphocyte capping and actin polymerization and alters cell morphology. Pyrichalasin H is indicated as the responsible agent for the genus-specific pathogenicity of M.grisea toward crabgrass. The first step in the pathway is catalyzed by the O-methyltransferase pyiA which methylates free tyrosine to generate the precursor O-methyltyrosine. The hybrid PKS-NRPS pyiS, assisted by the enoyl reductase pyiC, are responsible for fusion of the O-methyltyrosine precursor and the polyketide backbone. The polyketide synthase module (PKS) of pyiS is responsible for the synthesis of the polyketide backbone and the downstream nonribosomal peptide synthetase (NRPS) amidates the carboxyl end of the polyketide with the O-methyltyrosine precursor. As the NRPS A-domain demonstrates substrate tolerance, pyiS can also use phenylalanine, tyrosine and even para-chlorophenylalanine as amino acid precursor, which leads to the production of novel cytochalasans, including halogenated cytochalasans. Because pyiS lacks a designated enoylreductase (ER) domain, the required activity is provided the enoyl reductase pyiC. Reduction by the hydrolyase pyiE leads to 1,5-dihydropyrrolone, which is substrate for dehydration and intra-molecular Diels-Alder cyclization by the Diels-Alderase pyiF to yield the required isoindolone-fused macrocycle. The tailoring cytochrome P450 monooxygenases piyD and piyG catalyze the hydroxylation at C-18 and C-7, respectivily, whereas the short-chain dehydrogenase/reductase pyiH reduces the carbonyl at C-21 in preparation for the transfer of an acetyl group by the acetyltransferase pyiB. These 3 reactions whose order is not clear yet, lead to the production of O-methylpyrichalasin J, a deacetylated pyrichalasin H. Finally, pyiB to converts O-methylpyrichalasin J into the final product pyrichalasin H via acetylation of C-21. In Pyricularia grisea (Crabgrass-specific blast fungus), this protein is Acetyltransferase pyiB.